We begin with the raw amino-acid sequence, 117 residues long: Cuticle protein CP1243 (117 aa).

Tandem repeats lie at residues 1-17 (NYGESGIVYPDGRLVQF), 26-43 (AEIGEAGVVMHDGTHVQF), 67-84 (QPYGYSGIMKPDGNNRQF), and 93-110 (VLVGPSGAVTADGKNVQF).

As to expression, calcified shell.

This is Cuticle protein CP1243 from Cancer pagurus (Rock crab).